A 474-amino-acid chain; its full sequence is Alpha-galactosidase (474 aa).

Positions 1–22 (MINFSLLTSIVLLASKVVGVSP) are cleaved as a signal peptide. Disulfide bonds link Cys-43–Cys-75 and Cys-122–Cys-152. Asn-44 carries N-linked (GlcNAc...) asparagine glycosylation. Asp-73, Asp-74, and Lys-148 together coordinate substrate. Asp-150 serves as the catalytic Nucleophile. A glycan (N-linked (GlcNAc...) asparagine) is linked at Asn-176. Residue Arg-206 coordinates substrate. Catalysis depends on Asp-210, which acts as the Proton donor. 2 cysteine pairs are disulfide-bonded: Cys-222–Cys-238 and Cys-224–Cys-231. Residue Gln-252 participates in substrate binding. Residues Asn-271, Asn-414, Asn-423, Asn-436, and Asn-455 are each glycosylated (N-linked (GlcNAc...) asparagine).

This sequence belongs to the glycosyl hydrolase 27 family. In terms of assembly, homotetramer.

Its subcellular location is the secreted. It carries out the reaction Hydrolysis of terminal, non-reducing alpha-D-galactose residues in alpha-D-galactosides, including galactose oligosaccharides, galactomannans and galactolipids.. The protein is Alpha-galactosidase (MEL) of Torulaspora delbrueckii (Yeast).